Reading from the N-terminus, the 136-residue chain is Protein PsiE (136 aa).

The next 4 helical transmembrane spans lie at 15–35, 55–75, 82–102, and 108–128; these read ILQTVLNLGLLCLGLILVVFL, YELVEGLVVYFLYFEFIALIV, FHFPLRYFVYIGITAIVRLII, and PLDVLIYSAAILLLVITLWLC.

Belongs to the PsiE family.

It localises to the cell inner membrane. The chain is Protein PsiE from Escherichia coli O17:K52:H18 (strain UMN026 / ExPEC).